Consider the following 269-residue polypeptide: Pertussis toxin subunit 1 homolog (269 aa).

The first 34 residues, 1-34, serve as a signal peptide directing secretion; that stretch reads MRCTRAIRQTARTGWLTWLAILAVTAPVTSPAWA.

This sequence belongs to the bacterial exotoxin subunit A family.

In Bordetella bronchiseptica (strain ATCC BAA-588 / NCTC 13252 / RB50) (Alcaligenes bronchisepticus), this protein is Pertussis toxin subunit 1 homolog (ptxA).